A 614-amino-acid polypeptide reads, in one-letter code: UvrABC system protein C (614 aa).

Positions 20-98 (TAPGVYRMYA…IKSLSPRYNV (79 aa)) constitute a GIY-YIG domain. One can recognise a UVR domain in the interval 207–242 (DELTRELGEQMQAASEALEFEQAARLRDLISSLRSM).

Belongs to the UvrC family. Interacts with UvrB in an incision complex.

Its subcellular location is the cytoplasm. Functionally, the UvrABC repair system catalyzes the recognition and processing of DNA lesions. UvrC both incises the 5' and 3' sides of the lesion. The N-terminal half is responsible for the 3' incision and the C-terminal half is responsible for the 5' incision. The protein is UvrABC system protein C of Stenotrophomonas maltophilia (strain K279a).